A 229-amino-acid chain; its full sequence is Deoxyribose-phosphate aldolase (229 aa).

The active-site Proton donor/acceptor is Asp84. Lys146 (schiff-base intermediate with acetaldehyde) is an active-site residue. The Proton donor/acceptor role is filled by Lys188.

The protein belongs to the DeoC/FbaB aldolase family. DeoC type 1 subfamily.

The protein resides in the cytoplasm. It catalyses the reaction 2-deoxy-D-ribose 5-phosphate = D-glyceraldehyde 3-phosphate + acetaldehyde. Its pathway is carbohydrate degradation; 2-deoxy-D-ribose 1-phosphate degradation; D-glyceraldehyde 3-phosphate and acetaldehyde from 2-deoxy-alpha-D-ribose 1-phosphate: step 2/2. Functionally, catalyzes a reversible aldol reaction between acetaldehyde and D-glyceraldehyde 3-phosphate to generate 2-deoxy-D-ribose 5-phosphate. This chain is Deoxyribose-phosphate aldolase, found in Pyrobaculum neutrophilum (strain DSM 2338 / JCM 9278 / NBRC 100436 / V24Sta) (Thermoproteus neutrophilus).